We begin with the raw amino-acid sequence, 249 residues long: NAD-dependent protein deacylase 2 (249 aa).

Residues 1 to 240 form the Deacetylase sirtuin-type domain; sequence MNVADLLASS…PRLVEEVKRR (240 aa). Position 18–37 (18–37) interacts with NAD(+); the sequence is GAGISAESGVPTFRGPGGLW. Residues Tyr-62 and Arg-65 each contribute to the substrate site. 96–99 lines the NAD(+) pocket; sequence QNVD. Residue His-114 is the Proton acceptor of the active site. Residues Cys-122, Cys-125, Cys-142, and Cys-145 each coordinate Zn(2+). NAD(+)-binding positions include 182–184, 208–210, and Ala-226; these read GTS and NVE.

The protein belongs to the sirtuin family. Class III subfamily. Zn(2+) is required as a cofactor.

The protein resides in the cytoplasm. It catalyses the reaction N(6)-acetyl-L-lysyl-[protein] + NAD(+) + H2O = 2''-O-acetyl-ADP-D-ribose + nicotinamide + L-lysyl-[protein]. The catalysed reaction is N(6)-succinyl-L-lysyl-[protein] + NAD(+) + H2O = 2''-O-succinyl-ADP-D-ribose + nicotinamide + L-lysyl-[protein]. Its function is as follows. NAD-dependent lysine deacetylase and desuccinylase that specifically removes acetyl and succinyl groups on target proteins. Modulates the activities of several proteins which are inactive in their acylated form. Deacetylates the N-terminal lysine residue of Alba, the major archaeal chromatin protein and that, in turn, increases Alba's DNA binding affinity, thereby repressing transcription. The chain is NAD-dependent protein deacylase 2 from Pyrobaculum aerophilum (strain ATCC 51768 / DSM 7523 / JCM 9630 / CIP 104966 / NBRC 100827 / IM2).